We begin with the raw amino-acid sequence, 401 residues long: Protein KlcB (401 aa).

The interval 253–311 (AARSNAKGKAGGRERDPASAETAMRCSTAKADDCKAEAGPVSPEATMPGAGEASCSTAR) is disordered.

This chain is Protein KlcB (klcB), found in Escherichia coli.